Consider the following 200-residue polypeptide: NADH-quinone oxidoreductase subunit C (200 aa).

The protein belongs to the complex I 30 kDa subunit family. In terms of assembly, NDH-1 is composed of 14 different subunits. Subunits NuoB, C, D, E, F, and G constitute the peripheral sector of the complex.

The protein resides in the cell inner membrane. The catalysed reaction is a quinone + NADH + 5 H(+)(in) = a quinol + NAD(+) + 4 H(+)(out). Functionally, NDH-1 shuttles electrons from NADH, via FMN and iron-sulfur (Fe-S) centers, to quinones in the respiratory chain. The immediate electron acceptor for the enzyme in this species is believed to be ubiquinone. Couples the redox reaction to proton translocation (for every two electrons transferred, four hydrogen ions are translocated across the cytoplasmic membrane), and thus conserves the redox energy in a proton gradient. The polypeptide is NADH-quinone oxidoreductase subunit C (Paraburkholderia phytofirmans (strain DSM 17436 / LMG 22146 / PsJN) (Burkholderia phytofirmans)).